An 875-amino-acid chain; its full sequence is E3 SUMO-protein ligase SIZ1 (875 aa).

The region spanning 12–46 (LAYFRIKELKDILNQLGLPKQGKKQDLIDRVLALL) is the SAP domain. The PHD-type zinc finger occupies 114 to 169 (KVRCICSSTMVNDSMIQCEDQRCQVWQHLNCVLIPDKPGESAEVPPVFYCELCRLS). Residues 349–430 (SDLEVVAESV…FNRITSLLRN (82 aa)) form an SP-RING-type zinc finger. Zn(2+)-binding residues include Cys-380, His-382, Cys-403, and Cys-406. Residues 796–820 (GGGGNEEPAPADVNSQPQIPSTETG) are disordered. Residues 808–819 (VNSQPQIPSTET) are compositionally biased toward polar residues.

Belongs to the PIAS family.

Its subcellular location is the nucleus. It functions in the pathway protein modification; protein sumoylation. Probable SUMO E3 ligase that may regulate Pi starvation responses. The protein is E3 SUMO-protein ligase SIZ1 (SIZ1) of Oryza sativa subsp. japonica (Rice).